The sequence spans 195 residues: CASP-like protein 2C2 (195 aa).

At Met-1–Arg-18 the chain is on the cytoplasmic side. A helical transmembrane segment spans residues Leu-19 to Ala-39. Topologically, residues Glu-40–Gln-57 are extracellular. Residues Ala-58–Val-78 traverse the membrane as a helical segment. At Arg-79–Ala-106 the chain is on the cytoplasmic side. A helical membrane pass occupies residues Tyr-107–Val-127. At Glu-128–Gln-145 the chain is on the extracellular side. A helical membrane pass occupies residues Ala-146–Phe-166. The Cytoplasmic segment spans residues Ser-167 to His-195.

The protein belongs to the Casparian strip membrane proteins (CASP) family. In terms of assembly, homodimer and heterodimers.

Its subcellular location is the cell membrane. The sequence is that of CASP-like protein 2C2 from Oryza sativa subsp. japonica (Rice).